A 256-amino-acid chain; its full sequence is Large ribosomal subunit protein bL28m (256 aa).

The N-terminal 55 residues, 1–55 (MPLHKYPVWLWKRLQLREGICSRLPGHYLRSLEEERTPTPVHYRPHGAKFKINPK), are a transit peptide targeting the mitochondrion.

The protein belongs to the bacterial ribosomal protein bL28 family. In terms of assembly, component of the mitochondrial large ribosomal subunit (mt-LSU). Mature mammalian 55S mitochondrial ribosomes consist of a small (28S) and a large (39S) subunit. The 28S small subunit contains a 12S ribosomal RNA (12S mt-rRNA) and 30 different proteins. The 39S large subunit contains a 16S rRNA (16S mt-rRNA), a copy of mitochondrial valine transfer RNA (mt-tRNA(Val)), which plays an integral structural role, and 52 different proteins. Interacts with OXA1L. Found in a variety of normal tissues including spleen, testes, thymus, liver, kidney, brain, adrenal, lung and retinal tissue.

It is found in the mitochondrion. This Homo sapiens (Human) protein is Large ribosomal subunit protein bL28m (MRPL28).